Here is a 545-residue protein sequence, read N- to C-terminus: uncharacterized protein (545 aa).

The segment covering 1-10 has biased composition (basic residues); sequence MSRYRFRKAR. The tract at residues 1-25 is disordered; it reads MSRYRFRKARSNWPMGQNDSRWEPP. WD repeat units follow at residues 417 to 456 and 460 to 501; these read ACNT…NPMM and GHSN…MLCS.

This is an uncharacterized protein from Caenorhabditis elegans.